The chain runs to 500 residues: Aspartyl/glutamyl-tRNA(Asn/Gln) amidotransferase subunit B (500 aa).

The protein belongs to the GatB/GatE family. GatB subfamily. As to quaternary structure, heterotrimer of A, B and C subunits.

It catalyses the reaction L-glutamyl-tRNA(Gln) + L-glutamine + ATP + H2O = L-glutaminyl-tRNA(Gln) + L-glutamate + ADP + phosphate + H(+). The enzyme catalyses L-aspartyl-tRNA(Asn) + L-glutamine + ATP + H2O = L-asparaginyl-tRNA(Asn) + L-glutamate + ADP + phosphate + 2 H(+). Functionally, allows the formation of correctly charged Asn-tRNA(Asn) or Gln-tRNA(Gln) through the transamidation of misacylated Asp-tRNA(Asn) or Glu-tRNA(Gln) in organisms which lack either or both of asparaginyl-tRNA or glutaminyl-tRNA synthetases. The reaction takes place in the presence of glutamine and ATP through an activated phospho-Asp-tRNA(Asn) or phospho-Glu-tRNA(Gln). This chain is Aspartyl/glutamyl-tRNA(Asn/Gln) amidotransferase subunit B, found in Sinorhizobium medicae (strain WSM419) (Ensifer medicae).